Consider the following 185-residue polypeptide: MVKLGNNFAEKGTKQPLLEDGFDTIPLMTPLDVNQLQFPPPDKVVVKTKTEYEPDRKKGKARPPQIAEFTVSITEGVTERFKVSVLVLFALAFLTCVVFLVVYKVYKYDRACPDGFVLKNTQCIPEGLESYYAEQDSSAREKFYTVINHYNLAKQSITRSVSPWMSVLSEEKLSEQETEAAEKSA.

Topologically, residues 1–82 are cytoplasmic; the sequence is MVKLGNNFAE…ITEGVTERFK (82 aa). Residues 83–103 traverse the membrane as a helical; Signal-anchor for type II membrane protein segment; that stretch reads VSVLVLFALAFLTCVVFLVVY. The Lumenal portion of the chain corresponds to 104 to 185; it reads KVYKYDRACP…QETEAAEKSA (82 aa). A required for GRIP1 interaction region spans residues 129–164; the sequence is ESYYAEQDSSAREKFYTVINHYNLAKQSITRSVSPW.

It belongs to the NSG family. In terms of assembly, forms a complex with GRIP1, GRIA2 and STX12 through direct interaction with GRIP1; controls the intracellular fate of AMPAR and the endosomal sorting of the GRIA2 subunit toward recycling and membrane targeting. Interacts with STX12. Interacts with APP; could regulate APP processing. Interacts with FAM171A1.

It is found in the membrane. Its subcellular location is the golgi apparatus. It localises to the trans-Golgi network membrane. The protein resides in the endosome membrane. The protein localises to the cell projection. It is found in the dendrite. Its subcellular location is the early endosome membrane. It localises to the late endosome membrane. The protein resides in the lysosome lumen. The protein localises to the recycling endosome membrane. It is found in the cytoplasmic vesicle membrane. Its subcellular location is the golgi stack membrane. It localises to the endosome. The protein resides in the multivesicular body membrane. The protein localises to the endoplasmic reticulum membrane. Functionally, plays a role in the recycling mechanism in neurons of multiple receptors, including AMPAR, APP and L1CAM and acts at the level of early endosomes to promote sorting of receptors toward a recycling pathway. Regulates sorting and recycling of GRIA2 through interaction with GRIP1 and then contributes to the regulation of synaptic transmission and plasticity by affecting the recycling and targeting of AMPA receptors to the synapse. Is required for faithful sorting of L1CAM to axons by facilitating trafficking from somatodendritic early endosome or the recycling endosome. In an other hand, induces apoptosis via the activation of CASP3 in response to DNA damage. This is Neuronal vesicle trafficking-associated protein 1 from Macaca fascicularis (Crab-eating macaque).